Reading from the N-terminus, the 673-residue chain is DNA ligase (673 aa).

NAD(+) contacts are provided by residues 33 to 37 (DHQYD), 83 to 84 (SL), and Glu117. Lys119 serves as the catalytic N6-AMP-lysine intermediate. Residues Arg140, Glu175, Lys282, and Lys306 each contribute to the NAD(+) site. The Zn(2+) site is built by Cys400, Cys403, Cys418, and Cys424. The BRCT domain maps to 592-673 (RGSSAISGKT…WVKMVEDARS (82 aa)).

This sequence belongs to the NAD-dependent DNA ligase family. LigA subfamily. Mg(2+) is required as a cofactor. Mn(2+) serves as cofactor.

It catalyses the reaction NAD(+) + (deoxyribonucleotide)n-3'-hydroxyl + 5'-phospho-(deoxyribonucleotide)m = (deoxyribonucleotide)n+m + AMP + beta-nicotinamide D-nucleotide.. Functionally, DNA ligase that catalyzes the formation of phosphodiester linkages between 5'-phosphoryl and 3'-hydroxyl groups in double-stranded DNA using NAD as a coenzyme and as the energy source for the reaction. It is essential for DNA replication and repair of damaged DNA. In Anaplasma marginale (strain Florida), this protein is DNA ligase.